The chain runs to 144 residues: Snaclec coagulation factor IX/factor X-binding protein subunit B1 (144 aa).

An N-terminal signal peptide occupies residues 1 to 23; sequence MGRFIFVSFGLLVVFLSLSGTAA. 3 disulfides stabilise this stretch: cysteine 25–cysteine 36, cysteine 53–cysteine 142, and cysteine 119–cysteine 134. The C-type lectin domain maps to 32 to 143; the sequence is YEGHCYKPFN…CRMMANFVCE (112 aa).

It belongs to the snaclec family. As to quaternary structure, heterodimer of subunits A and B1; disulfide-linked. As to expression, expressed by the venom gland.

It is found in the secreted. Anticoagulant protein which binds to the gamma-carboxyglutamic acid-domain regions of factors IX (F9) and factor X (F10) in the presence of calcium with a 1 to 1 stoichiometry. The polypeptide is Snaclec coagulation factor IX/factor X-binding protein subunit B1 (Trimeresurus stejnegeri (Chinese green tree viper)).